Reading from the N-terminus, the 250-residue chain is Uracil-DNA glycosylase (250 aa).

The active-site Proton acceptor is the Asp78. The tract at residues Arg228–Leu250 is disordered.

It belongs to the uracil-DNA glycosylase (UDG) superfamily. UNG family.

It is found in the cytoplasm. The catalysed reaction is Hydrolyzes single-stranded DNA or mismatched double-stranded DNA and polynucleotides, releasing free uracil.. Its function is as follows. Excises uracil residues from the DNA which can arise as a result of misincorporation of dUMP residues by DNA polymerase or due to deamination of cytosine. This is Uracil-DNA glycosylase from Bordetella pertussis (strain Tohama I / ATCC BAA-589 / NCTC 13251).